We begin with the raw amino-acid sequence, 330 residues long: Tryptophan--tRNA ligase (330 aa).

ATP contacts are provided by residues 10-12 and 18-19; these read QTT and GN. The 'HIGH' region signature appears at 11-19; it reads TTGALHLGN. L-tryptophan is bound at residue D134. ATP-binding positions include 146–148, I186, and 195–199; these read GED and KMSKS. A 'KMSKS' region motif is present at residues 195–199; the sequence is KMSKS.

Belongs to the class-I aminoacyl-tRNA synthetase family. Homodimer.

It is found in the cytoplasm. The catalysed reaction is tRNA(Trp) + L-tryptophan + ATP = L-tryptophyl-tRNA(Trp) + AMP + diphosphate + H(+). Catalyzes the attachment of tryptophan to tRNA(Trp). The protein is Tryptophan--tRNA ligase of Rickettsia prowazekii (strain Madrid E).